The chain runs to 76 residues: Large ribosomal subunit protein bL31 (76 aa).

Zn(2+)-binding residues include C16, C18, C37, and C40.

It belongs to the bacterial ribosomal protein bL31 family. Type A subfamily. Part of the 50S ribosomal subunit. Requires Zn(2+) as cofactor.

Its function is as follows. Binds the 23S rRNA. The protein is Large ribosomal subunit protein bL31 of Maridesulfovibrio salexigens (strain ATCC 14822 / DSM 2638 / NCIMB 8403 / VKM B-1763) (Desulfovibrio salexigens).